The chain runs to 940 residues: Beta-mannosidase A (940 aa).

The first 21 residues, 1 to 21 (MHFHGIATQAVLASNITTGSG), serve as a signal peptide directing secretion. N-linked (GlcNAc...) asparagine glycosylation is found at N15, N39, N79, N245, N314, N321, and N344. Catalysis depends on E476, which acts as the Proton donor. Residues N534, N605, N626, N653, N733, N761, and N785 are each glycosylated (N-linked (GlcNAc...) asparagine).

It belongs to the glycosyl hydrolase 2 family. Beta-mannosidase A subfamily. In terms of assembly, homodimer.

Its subcellular location is the secreted. It catalyses the reaction Hydrolysis of terminal, non-reducing beta-D-mannose residues in beta-D-mannosides.. The protein operates within glycan metabolism; N-glycan degradation. In terms of biological role, exoglycosidase that cleaves the single beta-linked mannose residue from the non-reducing end of beta-mannosidic oligosaccharides of various complexity and length. Involved in the degradation of polymeric mannan and galactomannan. The protein is Beta-mannosidase A (mndA) of Emericella nidulans (strain FGSC A4 / ATCC 38163 / CBS 112.46 / NRRL 194 / M139) (Aspergillus nidulans).